The sequence spans 598 residues: Aspartate--tRNA(Asp/Asn) ligase (598 aa).

E177 contacts L-aspartate. The segment at 201–204 (QIFK) is aspartate. 2 residues coordinate L-aspartate: R223 and H451. An ATP-binding site is contributed by 223–225 (RDE). E485 contributes to the ATP binding site. R492 serves as a coordination point for L-aspartate. 537 to 540 (GVDR) contacts ATP.

The protein belongs to the class-II aminoacyl-tRNA synthetase family. Type 1 subfamily. In terms of assembly, homodimer.

The protein resides in the cytoplasm. It catalyses the reaction tRNA(Asx) + L-aspartate + ATP = L-aspartyl-tRNA(Asx) + AMP + diphosphate. Aspartyl-tRNA synthetase with relaxed tRNA specificity since it is able to aspartylate not only its cognate tRNA(Asp) but also tRNA(Asn). Reaction proceeds in two steps: L-aspartate is first activated by ATP to form Asp-AMP and then transferred to the acceptor end of tRNA(Asp/Asn). The chain is Aspartate--tRNA(Asp/Asn) ligase from Anaplasma phagocytophilum (strain HZ).